The primary structure comprises 212 residues: Nitrile hydratase subunit beta (212 aa).

Belongs to the nitrile hydratase subunit beta family. In terms of assembly, heterodimer of an alpha and a beta chain.

It catalyses the reaction an aliphatic primary amide = an aliphatic nitrile + H2O. Its function is as follows. NHase catalyzes the hydration of various nitrile compounds to the corresponding amides. The chain is Nitrile hydratase subunit beta (nthB) from Rhodococcus erythropolis (Arthrobacter picolinophilus).